The chain runs to 196 residues: Pyridoxal 5'-phosphate synthase subunit PdxT (196 aa).

L-glutamine is bound at residue 46 to 48 (GES). The active-site Nucleophile is the C78. L-glutamine-binding positions include R105 and 133-134 (IR). Active-site charge relay system residues include H169 and E171.

This sequence belongs to the glutaminase PdxT/SNO family. In the presence of PdxS, forms a dodecamer of heterodimers. Only shows activity in the heterodimer.

It carries out the reaction aldehydo-D-ribose 5-phosphate + D-glyceraldehyde 3-phosphate + L-glutamine = pyridoxal 5'-phosphate + L-glutamate + phosphate + 3 H2O + H(+). The enzyme catalyses L-glutamine + H2O = L-glutamate + NH4(+). It participates in cofactor biosynthesis; pyridoxal 5'-phosphate biosynthesis. Functionally, catalyzes the hydrolysis of glutamine to glutamate and ammonia as part of the biosynthesis of pyridoxal 5'-phosphate. The resulting ammonia molecule is channeled to the active site of PdxS. The protein is Pyridoxal 5'-phosphate synthase subunit PdxT of Geobacillus stearothermophilus (Bacillus stearothermophilus).